The sequence spans 377 residues: Protein RecA (377 aa).

Residue 82–89 (GPESSGKT) coordinates ATP. The segment at 345–377 (EGSEVSANSMRPLASAARQASSRPNLSQVSANG) is disordered. A compositionally biased stretch (polar residues) spans 362-377 (RQASSRPNLSQVSANG).

Belongs to the RecA family.

It localises to the cytoplasm. Its function is as follows. Can catalyze the hydrolysis of ATP in the presence of single-stranded DNA, the ATP-dependent uptake of single-stranded DNA by duplex DNA, and the ATP-dependent hybridization of homologous single-stranded DNAs. It interacts with LexA causing its activation and leading to its autocatalytic cleavage. This Prochlorococcus marinus (strain NATL2A) protein is Protein RecA.